Here is a 361-residue protein sequence, read N- to C-terminus: UDP-3-O-acylglucosamine N-acyltransferase (361 aa).

His-253 (proton acceptor) is an active-site residue.

It belongs to the transferase hexapeptide repeat family. LpxD subfamily. As to quaternary structure, homotrimer.

The enzyme catalyses a UDP-3-O-[(3R)-3-hydroxyacyl]-alpha-D-glucosamine + a (3R)-hydroxyacyl-[ACP] = a UDP-2-N,3-O-bis[(3R)-3-hydroxyacyl]-alpha-D-glucosamine + holo-[ACP] + H(+). Its pathway is bacterial outer membrane biogenesis; LPS lipid A biosynthesis. In terms of biological role, catalyzes the N-acylation of UDP-3-O-acylglucosamine using 3-hydroxyacyl-ACP as the acyl donor. Is involved in the biosynthesis of lipid A, a phosphorylated glycolipid that anchors the lipopolysaccharide to the outer membrane of the cell. The protein is UDP-3-O-acylglucosamine N-acyltransferase of Burkholderia pseudomallei (strain 1710b).